Consider the following 451-residue polypeptide: Portal protein (451 aa).

This sequence belongs to the SPP1-like portal protein family. Homododecamer.

It is found in the virion. Forms the portal vertex of the capsid. This portal plays critical roles in head assembly, genome packaging, neck/tail attachment, and genome ejection. The portal protein multimerizes as a single ring-shaped homododecamer arranged around a central channel. Binds to the terminase subunits to form the packaging machine. The chain is Portal protein from Clostridium phage phiCD119 (strain Clostridium difficile/United States/Govind/2006) (Bacteriophage phiCD119).